We begin with the raw amino-acid sequence, 182 residues long: Oligoribonuclease (182 aa).

In terms of domain architecture, Exonuclease spans 8 to 171; the sequence is LIWIDLEMTG…DDIRESIKEL (164 aa). Residue tyrosine 129 is part of the active site.

Belongs to the oligoribonuclease family.

Its subcellular location is the cytoplasm. Functionally, 3'-to-5' exoribonuclease specific for small oligoribonucleotides. In Haemophilus influenzae (strain 86-028NP), this protein is Oligoribonuclease.